Here is a 151-residue protein sequence, read N- to C-terminus: Ribosome maturation factor RimP (151 aa).

It belongs to the RimP family.

It is found in the cytoplasm. Functionally, required for maturation of 30S ribosomal subunits. The chain is Ribosome maturation factor RimP from Pseudoalteromonas translucida (strain TAC 125).